The sequence spans 365 residues: NAD(P)H-quinone oxidoreductase subunit 1, chloroplastic (365 aa).

A run of 6 helical transmembrane segments spans residues 29 to 49, 106 to 126, 129 to 149, 250 to 270, 302 to 322, and 338 to 358; these read IWLL…VLVI, IAVI…HLVL, LSIG…GLLM, YSGI…LVSS, IFGM…FLFI, and LLNL…LLTT.

This sequence belongs to the complex I subunit 1 family. As to quaternary structure, NDH is composed of at least 16 different subunits, 5 of which are encoded in the nucleus.

The protein resides in the plastid. Its subcellular location is the chloroplast thylakoid membrane. It carries out the reaction a plastoquinone + NADH + (n+1) H(+)(in) = a plastoquinol + NAD(+) + n H(+)(out). The catalysed reaction is a plastoquinone + NADPH + (n+1) H(+)(in) = a plastoquinol + NADP(+) + n H(+)(out). NDH shuttles electrons from NAD(P)H:plastoquinone, via FMN and iron-sulfur (Fe-S) centers, to quinones in the photosynthetic chain and possibly in a chloroplast respiratory chain. The immediate electron acceptor for the enzyme in this species is believed to be plastoquinone. Couples the redox reaction to proton translocation, and thus conserves the redox energy in a proton gradient. The protein is NAD(P)H-quinone oxidoreductase subunit 1, chloroplastic of Acorus calamus (Sweet flag).